The sequence spans 968 residues: Insulin receptor substrate 1 (968 aa).

In terms of domain architecture, PH spans 8–109 (GMALSGYLKK…WLDKLLVLQR (102 aa)). The region spanning 122-236 (YDHVWQVVIQ…SAMSAKTESN (115 aa)) is the IRS-type PTB domain. The segment at 248-269 (DLSHEPMRKRSSSANEASKPIN) is disordered. Ser286 and Ser287 each carry phosphoserine. Polar residues predominate over residues 304–329 (RNGTLSESSNQTYFGSNHGLRSNTIS). The segment at 304-370 (RNGTLSESSN…VDESDDNGSF (67 aa)) is disordered. Ser342 is modified (phosphoserine). Residue Tyr411 is modified to Phosphotyrosine; by INSR. A YXXM motif 1 motif is present at residues 411 to 414 (YIPM). Residues 528–555 (TANRSQSSITKEGTSYGSSANRQKKSTS) form a disordered region. The segment covering 529–555 (ANRSQSSITKEGTSYGSSANRQKKSTS) has biased composition (polar residues). At Ser555 the chain carries Phosphoserine. The YXXM motif 2 motif lies at 641 to 644 (YLEM). Residues 697–711 (EKWREQPSRSEEKKS) show a composition bias toward basic and acidic residues. Residues 697 to 739 (EKWREQPSRSEEKKSNSPLNDNTFSSKPTNVESTSKSHDVHSA) form a disordered region. The segment covering 712–730 (NSPLNDNTFSSKPTNVEST) has biased composition (polar residues). At Tyr911 the chain carries Phosphotyrosine; by INSR. The tract at residues 922-968 (QNPAKYLKRGSRESPPVSACPEDGNTYAKIDFDQSDSSSSSSNIFNT) is disordered. Phosphoserine is present on residues Ser932 and Ser935. Tyr948 carries the phosphotyrosine; by INSR modification. Residues 956 to 968 (SDSSSSSSNIFNT) show a composition bias toward low complexity.

Bindings to phosphatidylinositol 3-kinase and SHP2.

In terms of biological role, activates phosphatidylinositol 3-kinase when bound to the regulatory p85 subunit. May mediate the control of various cellular processes by insulin-like peptides. When phosphorylated by the insulin receptor binds specifically to various cellular proteins containing SH2 domains. Involved in control of cell proliferation, cell size, and body and organ growth throughout development. Also has a role in a signaling pathway controlling the physiological response required to endure periods of low nutrient conditions. Insulin/insulin-like growth factor (IGF) signaling pathway has a role in regulating aging and is necessary in the ovary for vitellogenic maturation. The sequence is that of Insulin receptor substrate 1 (chico) from Drosophila melanogaster (Fruit fly).